An 872-amino-acid polypeptide reads, in one-letter code: Alanine--tRNA ligase (872 aa).

Positions 561, 565, 662, and 666 each coordinate Zn(2+).

It belongs to the class-II aminoacyl-tRNA synthetase family. Zn(2+) is required as a cofactor.

It localises to the cytoplasm. The enzyme catalyses tRNA(Ala) + L-alanine + ATP = L-alanyl-tRNA(Ala) + AMP + diphosphate. Its function is as follows. Catalyzes the attachment of alanine to tRNA(Ala) in a two-step reaction: alanine is first activated by ATP to form Ala-AMP and then transferred to the acceptor end of tRNA(Ala). Also edits incorrectly charged Ser-tRNA(Ala) and Gly-tRNA(Ala) via its editing domain. The chain is Alanine--tRNA ligase from Thiobacillus denitrificans (strain ATCC 25259 / T1).